Consider the following 24-residue polypeptide: L-amino-acid oxidase (24 aa).

This sequence belongs to the flavin monoamine oxidase family. FIG1 subfamily. Homodimer; non-covalently linked. The cofactor is FAD. Post-translationally, N-glycosylated. As to expression, expressed by the venom gland.

The protein localises to the secreted. It carries out the reaction an L-alpha-amino acid + O2 + H2O = a 2-oxocarboxylate + H2O2 + NH4(+). Its function is as follows. Catalyzes an oxidative deamination of predominantly hydrophobic and aromatic L-amino acids, thus producing hydrogen peroxide that may contribute to the diverse toxic effects of this enzyme. Exhibits diverse biological activities, such as hemorrhage, hemolysis, edema, apoptosis, and antiparasitic activities. This protein has antibacterial activity (against E.coli, S.aureus, and B.dysenteriae), cytotoxic activity, as well as an ability to induce platelet aggregation. Effects of snake L-amino oxidases on platelets are controversial, since they either induce aggregation or inhibit agonist-induced aggregation. These different effects are probably due to different experimental conditions. This Protobothrops mucrosquamatus (Taiwan habu) protein is L-amino-acid oxidase.